A 275-amino-acid polypeptide reads, in one-letter code: MIHFTKMHGLGNDFMVVDGVTQNVFFSPEQIRRLADRNFGIGFDQLLLVEPPYDPDLDFHYRIFNADGSEVEQCGNGARCFARFVRNKGLTQKHKIKVSTSAGKMTLRLERDGGVTVNMGVPILDPAQIPFKAKKFEKTYLLQSAQQTFLCGAVSMGNPHVVLEVDDITQAPVADVGAQLTRHERFPKGVNVGFMQVVAPDHIKLRVYERGAAETLACGSGACAAAVVGQLQGKLGSRVRVDLPGGSLTINWEGEGKPLWMTGPAQQVYDGQIQL.

Residues Asn-12, Gln-45, and Asn-65 each coordinate substrate. Residue Cys-74 is the Proton donor of the active site. Residues 75–76, Asn-158, Asn-191, and 209–210 contribute to the substrate site; these read GN and ER. Catalysis depends on Cys-218, which acts as the Proton acceptor. 219–220 provides a ligand contact to substrate; it reads GS.

It belongs to the diaminopimelate epimerase family. As to quaternary structure, homodimer.

Its subcellular location is the cytoplasm. It carries out the reaction (2S,6S)-2,6-diaminopimelate = meso-2,6-diaminopimelate. It functions in the pathway amino-acid biosynthesis; L-lysine biosynthesis via DAP pathway; DL-2,6-diaminopimelate from LL-2,6-diaminopimelate: step 1/1. Catalyzes the stereoinversion of LL-2,6-diaminopimelate (L,L-DAP) to meso-diaminopimelate (meso-DAP), a precursor of L-lysine and an essential component of the bacterial peptidoglycan. This Shewanella amazonensis (strain ATCC BAA-1098 / SB2B) protein is Diaminopimelate epimerase.